The primary structure comprises 143 residues: UPF0251 protein Rru_A1194 (143 aa).

Residues 100-143 are disordered; sequence LDGSACPNRRQRRGPCARRGAAGALARQTGDEPPSSPTDNEKDD. The span at 116–126 shows a compositional bias: low complexity; that stretch reads ARRGAAGALAR.

Belongs to the UPF0251 family.

The polypeptide is UPF0251 protein Rru_A1194 (Rhodospirillum rubrum (strain ATCC 11170 / ATH 1.1.1 / DSM 467 / LMG 4362 / NCIMB 8255 / S1)).